The sequence spans 397 residues: Elongation factor Tu (397 aa).

The tr-type G domain maps to 10-206 (KPHVNIGTIG…AVDEYIPTPE (197 aa)). Residues 19-26 (GHIDHGKT) form a G1 region. GTP is bound at residue 19 to 26 (GHIDHGKT). Thr26 contacts Mg(2+). Residues 62–66 (GITIS) form a G2 region. Residues 83–86 (DCPG) form a G3 region. GTP contacts are provided by residues 83–87 (DCPGH) and 138–141 (NKCD). Residues 138-141 (NKCD) are G4. The segment at 176-178 (AAF) is G5.

It belongs to the TRAFAC class translation factor GTPase superfamily. Classic translation factor GTPase family. EF-Tu/EF-1A subfamily. In terms of assembly, monomer.

It is found in the cytoplasm. It carries out the reaction GTP + H2O = GDP + phosphate + H(+). Functionally, GTP hydrolase that promotes the GTP-dependent binding of aminoacyl-tRNA to the A-site of ribosomes during protein biosynthesis. This chain is Elongation factor Tu, found in Nocardioides sp. (strain ATCC BAA-499 / JS614).